Consider the following 88-residue polypeptide: Small ribosomal subunit protein uS15 (88 aa).

It belongs to the universal ribosomal protein uS15 family. In terms of assembly, part of the 30S ribosomal subunit. Forms a bridge to the 50S subunit in the 70S ribosome, contacting the 23S rRNA.

One of the primary rRNA binding proteins, it binds directly to 16S rRNA where it helps nucleate assembly of the platform of the 30S subunit by binding and bridging several RNA helices of the 16S rRNA. Functionally, forms an intersubunit bridge (bridge B4) with the 23S rRNA of the 50S subunit in the ribosome. The chain is Small ribosomal subunit protein uS15 from Mycoplasmopsis synoviae (strain 53) (Mycoplasma synoviae).